Consider the following 295-residue polypeptide: Protein FAM221A (295 aa).

Over residues 272–283 the composition is skewed to basic and acidic residues; that stretch reads QERLLKEKEQKR. The segment at 272–295 is disordered; that stretch reads QERLLKEKEQKRQKNSKPPTTNRP.

This sequence belongs to the FAM221 family.

This Xenopus tropicalis (Western clawed frog) protein is Protein FAM221A (fam221a).